Consider the following 455-residue polypeptide: Golgi pH regulator (455 aa).

5 consecutive transmembrane segments (helical) span residues 5–25, 46–66, 79–99, 114–134, and 150–170; these read IDSSIMVTSQILFFGFGWLFF, VTFAFSCTMFELIIFEILGVL, LCVILLILVFMVPFYIGYFIV, CLLWLTFMYFFWKLGDPFPIL, and VGVIGVTLMALLSGFGAVNCP. Asparagine 180 and asparagine 243 each carry an N-linked (GlcNAc...) asparagine glycan. Transmembrane regions (helical) follow at residues 290 to 310, 343 to 363, 378 to 398, and 425 to 445; these read GYFFSIYCVWKIFMATINIVL, ISFILVGIIIVSSIRGLLITL, VIVLLLAQIMGMYFVSSVLLI, and WFDVIFLVSALSSILFLYLAH.

This sequence belongs to the Golgi pH regulator (TC 1.A.38) family. As to quaternary structure, homotrimer. Interacts with RABL3; the interaction stabilizes GPR89B.

The protein localises to the golgi apparatus membrane. It catalyses the reaction iodide(out) = iodide(in). The catalysed reaction is chloride(in) = chloride(out). It carries out the reaction bromide(in) = bromide(out). The enzyme catalyses fluoride(in) = fluoride(out). Voltage-gated channel that enables the transfer of anions such as iodide, chloride, bromide and fluoride which may function in counter-ion conductance and participates in Golgi acidification. Plays a role in lymphocyte development, probably by acting as a RABL3 effector in hematopoietic cells. The sequence is that of Golgi pH regulator from Cricetulus griseus (Chinese hamster).